Reading from the N-terminus, the 445-residue chain is Maltoporin 2 (445 aa).

Residues 1–25 (MKMKAKWLPIAAAVTAALASQAAFA) form the signal peptide.

The protein belongs to the porin LamB (TC 1.B.3) family. As to quaternary structure, homotrimer formed of three 18-stranded antiparallel beta-barrels, containing three independent channels.

The protein resides in the cell outer membrane. It catalyses the reaction beta-maltose(in) = beta-maltose(out). Functionally, involved in the transport of maltose and maltodextrins. In Aeromonas salmonicida (strain A449), this protein is Maltoporin 2.